We begin with the raw amino-acid sequence, 541 residues long: Calcium-dependent protein kinase 25 (541 aa).

The segment covering 1 to 11 (MGQCCTGGGKA) has biased composition (gly residues). The disordered stretch occupies residues 1 to 74 (MGQCCTGGGK…AGPIGEVLER (74 aa)). A lipid anchor (N-myristoyl glycine) is attached at glycine 2. Positions 38–67 (AKQQPCSPAAKAAATEAAAAASSSKKPAGP) are enriched in low complexity. Residues 83 to 341 (YSIGKELGRG…AFQVLNHPWI (259 aa)) enclose the Protein kinase domain. ATP-binding positions include 89 to 97 (LGRGQFGVT) and lysine 112. The active-site Proton acceptor is aspartate 207. Residues 347 to 377 (APDVPLDNVVLNRLKQFRAMNQFKKAALRII) form an autoinhibitory domain region. EF-hand domains follow at residues 384-419 (EEIKGLKEMFKNIDKDNSGTITLEELKNGLAKQGTK), 420-455 (FSDNEIEQLMEAADADGNGIIDYEEFVTATVHMNKM), 456-491 (DREEHLYTAFQYFDKDNSGYITKEELEQALKEQGLY), and 493-526 (ANEIKDVITDADSNNDGRIDYSEFVAMMRKGSGC). Residues aspartate 397, aspartate 399, serine 401, threonine 403, glutamate 408, aspartate 433, aspartate 435, asparagine 437, glutamate 444, aspartate 469, aspartate 471, serine 473, tyrosine 475, glutamate 480, aspartate 504, asparagine 506, aspartate 508, arginine 510, and glutamate 515 each coordinate Ca(2+).

Belongs to the protein kinase superfamily. Ser/Thr protein kinase family. CDPK subfamily. In terms of tissue distribution, specifically expressed in heading panicles, spikelets and mature pollen grains. Not expressed in vegetative tissues.

The protein resides in the membrane. It carries out the reaction L-seryl-[protein] + ATP = O-phospho-L-seryl-[protein] + ADP + H(+). The catalysed reaction is L-threonyl-[protein] + ATP = O-phospho-L-threonyl-[protein] + ADP + H(+). With respect to regulation, activated by calcium. Autophosphorylation may play an important role in the regulation of the kinase activity. Its function is as follows. May play a role in signal transduction pathways that involve calcium as a second messenger. The sequence is that of Calcium-dependent protein kinase 25 from Oryza sativa subsp. japonica (Rice).